Reading from the N-terminus, the 355-residue chain is tRNA uridine(34) hydroxylase (355 aa).

The Rhodanese domain maps to 146-240 (DDPDTVFVDM…YARQAKAQGL (95 aa)). C200 serves as the catalytic Cysteine persulfide intermediate.

Belongs to the TrhO family.

It catalyses the reaction uridine(34) in tRNA + AH2 + O2 = 5-hydroxyuridine(34) in tRNA + A + H2O. In terms of biological role, catalyzes oxygen-dependent 5-hydroxyuridine (ho5U) modification at position 34 in tRNAs. The sequence is that of tRNA uridine(34) hydroxylase from Pectobacterium carotovorum subsp. carotovorum (strain PC1).